Here is a 239-residue protein sequence, read N- to C-terminus: MTQQIKYKRVLLKLSGESLMGSDPFGINHDTIVQTVGEIAEVVKMGVQVGIVVGGGNIFRGVSAQAGSMDRATADYMGMMATVMNALALKDAFETLGIKARVQSALSMQQIAETYARPKAIQYLEEGKVVIFAAGTGNPFFTTDTAAALRGAEMNCDVMLKATNVDGVYTADPKKDSSATRYETITFDEALLKNLKVMDATAFALCRERKLNIVVFGIAKEGSLKRVVTGENEGTLVHC.

Residue 13-16 participates in ATP binding; the sequence is KLSG. Gly-55 is a UMP binding site. ATP is bound by residues Gly-56 and Arg-60. UMP contacts are provided by residues Asp-75 and 136–143; that span reads TGNPFFTT. Thr-163, Asn-164, Tyr-169, and Asp-172 together coordinate ATP.

The protein belongs to the UMP kinase family. In terms of assembly, homohexamer.

The protein localises to the cytoplasm. The catalysed reaction is UMP + ATP = UDP + ADP. It functions in the pathway pyrimidine metabolism; CTP biosynthesis via de novo pathway; UDP from UMP (UMPK route): step 1/1. Its activity is regulated as follows. Inhibited by UTP. In terms of biological role, catalyzes the reversible phosphorylation of UMP to UDP. In Neisseria meningitidis serogroup C / serotype 2a (strain ATCC 700532 / DSM 15464 / FAM18), this protein is Uridylate kinase.